The primary structure comprises 287 residues: Beta-lactamase GES-2 (287 aa).

Positions 1 to 18 are cleaved as a signal peptide; the sequence is MRFIHALLLAGIAHSAYA. The cysteines at positions 63 and 233 are disulfide-linked. Catalysis depends on serine 64, which acts as the Nucleophile; acyl-ester intermediate. 3 residues coordinate a beta-lactam: lysine 67, serine 125, and glutamate 161.

The protein belongs to the class-A beta-lactamase family.

The catalysed reaction is a beta-lactam + H2O = a substituted beta-amino acid. With respect to regulation, inhibited by the beta-lactamase-blocking agents clavulanic acid, sulbactam and tazobactam. In terms of biological role, extended-spectrum beta-lactamase (ESBL) which confers resistance to penicillins, as well as first, third and fourth-generation cephalosporins. Has modest carbapenem-hydrolyzing activity. Has cefotaxime-hydrolyzing activity. This is Beta-lactamase GES-2 from Pseudomonas aeruginosa.